The sequence spans 796 residues: Protocadherin beta-3 (796 aa).

A signal peptide spans 1 to 26; that stretch reads MEAGGERFLRQRQVLLLFVFLGGSLA. Residues 27–690 are Extracellular-facing; it reads GSESRRYSVA…AQADLLTVYL (664 aa). 5 Cadherin domains span residues 35–133, 138–242, 247–347, 352–451, and 456–561; these read VAEE…SPVF, MHLK…APEF, YEVA…PPEL, VNSP…APAF, and YTLF…SPFV. N-linked (GlcNAc...) asparagine glycosylation occurs at Asn-169. 2 N-linked (GlcNAc...) asparagine glycosylation sites follow: Asn-418 and Asn-436. The N-linked (GlcNAc...) asparagine glycan is linked to Asn-567. In terms of domain architecture, Cadherin 6 spans 568 to 671; that stretch reads GSAPCTELVP…LVDGFSQPYL (104 aa). A helical transmembrane segment spans residues 691-711; that stretch reads VVALASVSSLFLFSVLLFVAV. At 712–796 the chain is on the cytoplasmic side; the sequence is RLCRRSRAAS…PSFRKSFEFS (85 aa).

It is found in the cell membrane. Potential calcium-dependent cell-adhesion protein. May be involved in the establishment and maintenance of specific neuronal connections in the brain. The chain is Protocadherin beta-3 (PCDHB3) from Homo sapiens (Human).